We begin with the raw amino-acid sequence, 353 residues long: Phosphate acyltransferase (353 aa).

It belongs to the PlsX family. Homodimer. Probably interacts with PlsY.

Its subcellular location is the cytoplasm. The catalysed reaction is a fatty acyl-[ACP] + phosphate = an acyl phosphate + holo-[ACP]. Its pathway is lipid metabolism; phospholipid metabolism. Its function is as follows. Catalyzes the reversible formation of acyl-phosphate (acyl-PO(4)) from acyl-[acyl-carrier-protein] (acyl-ACP). This enzyme utilizes acyl-ACP as fatty acyl donor, but not acyl-CoA. In Nitrosospira multiformis (strain ATCC 25196 / NCIMB 11849 / C 71), this protein is Phosphate acyltransferase.